We begin with the raw amino-acid sequence, 299 residues long: Coenzyme PQQ synthesis protein B (299 aa).

This sequence belongs to the PqqB family.

It participates in cofactor biosynthesis; pyrroloquinoline quinone biosynthesis. Its function is as follows. May be involved in the transport of PQQ or its precursor to the periplasm. This chain is Coenzyme PQQ synthesis protein B, found in Methylobacterium radiotolerans (strain ATCC 27329 / DSM 1819 / JCM 2831 / NBRC 15690 / NCIMB 10815 / 0-1).